Here is a 432-residue protein sequence, read N- to C-terminus: Thiol-specific monooxygenase (432 aa).

Residues 13-17 (GGGPG) and 46-47 (VW) contribute to the FAD site. Residue 65-66 (TN) coordinates NADP(+). 117-118 (EV) lines the FAD pocket. Residue 199–202 (SGQD) participates in NADP(+) binding.

Belongs to the FMO family. In terms of assembly, monomer. It depends on FAD as a cofactor.

In terms of biological role, flavin-dependent oxidation of thiol-containing compounds. Probably required for the correct folding of disulfide-bonded proteins. The polypeptide is Thiol-specific monooxygenase (FMO1) (Saccharomyces cerevisiae (strain ATCC 204508 / S288c) (Baker's yeast)).